Reading from the N-terminus, the 101-residue chain is Enhancer of yellow 2 transcription factor (101 aa).

It belongs to the ENY2 family. Component of the nuclear pore complex (NPC)-associated AMEX complex (anchoring and mRNA export complex), composed of at least e(y)2 and xmas-2. Component of the SAGA transcription coactivator-HAT complexes, at least composed of Ada2b, e(y)2, Pcaf/Gcn5, Taf10 and Nipped-A/Trrap. Within the SAGA complex, e(y)2, Sgf11, and not/nonstop form an additional subcomplex of SAGA called the DUB module (deubiquitination module). Component of the THO complex, composed of at least e(y)2, HPR1, THO2, THOC5, THOC6 and THOC7. Interacts with e(y)1. Interacts with su(Hw) (via zinc fingers). Interacts with xmas-2; required for localization to the nuclear periphery. Interacts with the nuclear pore complex (NPC).

The protein localises to the nucleus. It is found in the nucleoplasm. The protein resides in the cytoplasm. Involved in mRNA export coupled transcription activation by association with both the AMEX and the SAGA complexes. The SAGA complex is a multiprotein complex that activates transcription by remodeling chromatin and mediating histone acetylation and deubiquitination. Within the SAGA complex, participates in a subcomplex that specifically deubiquitinates histone H2B. The SAGA complex is recruited to specific gene promoters by activators, where it is required for transcription. Required for nuclear receptor-mediated transactivation. Involved in transcription elongation by recruiting the THO complex onto nascent mRNA. The AMEX complex functions in docking export-competent ribonucleoprotein particles (mRNPs) to the nuclear entrance of the nuclear pore complex (nuclear basket). AMEX participates in mRNA export and accurate chromatin positioning in the nucleus by tethering genes to the nuclear periphery. The sequence is that of Enhancer of yellow 2 transcription factor from Drosophila yakuba (Fruit fly).